We begin with the raw amino-acid sequence, 430 residues long: Adenylosuccinate synthetase (430 aa).

GTP contacts are provided by residues 13-19 (GDEGKGK) and 41-43 (GHT). Catalysis depends on aspartate 14, which acts as the Proton acceptor. Aspartate 14 and glycine 41 together coordinate Mg(2+). IMP-binding positions include 14 to 17 (DEGK), 39 to 42 (NAGH), threonine 130, arginine 144, glutamine 225, threonine 240, and arginine 304. Residue histidine 42 is the Proton donor of the active site. Substrate is bound at residue 300 to 306 (ATTGRAR). GTP-binding positions include arginine 306, 332–334 (KLD), and 414–416 (STG).

Belongs to the adenylosuccinate synthetase family. In terms of assembly, homodimer. Mg(2+) is required as a cofactor.

It localises to the cytoplasm. It carries out the reaction IMP + L-aspartate + GTP = N(6)-(1,2-dicarboxyethyl)-AMP + GDP + phosphate + 2 H(+). It participates in purine metabolism; AMP biosynthesis via de novo pathway; AMP from IMP: step 1/2. Plays an important role in the de novo pathway of purine nucleotide biosynthesis. Catalyzes the first committed step in the biosynthesis of AMP from IMP. This Pseudomonas paraeruginosa (strain DSM 24068 / PA7) (Pseudomonas aeruginosa (strain PA7)) protein is Adenylosuccinate synthetase.